We begin with the raw amino-acid sequence, 274 residues long: Lectin-like protein (274 aa).

A signal peptide spans 1-19; sequence MKIHKLCFLALLLAHTTSA. A legume-lectin like region spans residues 28–268; the sequence is TSELVFLGDA…RHDIWSWTFQ (241 aa). The disordered stretch occupies residues 62–81; sequence SHGQSLWSTPVPFKPSSNSS. N-linked (GlcNAc...) asparagine glycosylation is present at Asn129. Position 238 is a phosphoserine (Ser238).

The protein belongs to the leguminous lectin family. Expressed in seedlings and leaves of adult plants.

The protein localises to the secreted. The protein resides in the extracellular space. It localises to the apoplast. It is found in the cell membrane. In terms of biological role, plays a positive role in the effector-triggered immunity (ETI) response. Involved in salicylic acid (SA)-mediated processes occurring in ETI response, but is not involved in the autophagy process. Promotes systemic rather than local immunity. Essential for systemic acquired resistance (SAR), but not necessary for immune signaling downstream of SA. May act in parallel with SA. This chain is Lectin-like protein, found in Arabidopsis thaliana (Mouse-ear cress).